The chain runs to 173 residues: Lithostathine-2 (173 aa).

Positions M1–G22 are cleaved as a signal peptide. Residues I41 to F171 form the C-type lectin domain. 3 disulfides stabilise this stretch: C43-C54, C71-C169, and C144-C161.

In terms of tissue distribution, expressed only in regenerating islets and normal exocrine pancreas, but not in normal pancreatic islets. Expressed strongly in pancreas, weakly in liver, but not at all in gall bladder.

Its subcellular location is the secreted. In terms of biological role, might act as an inhibitor of spontaneous calcium carbonate precipitation. The polypeptide is Lithostathine-2 (Reg2) (Mus musculus (Mouse)).